Consider the following 85-residue polypeptide: Small ribosomal subunit protein uS17 (85 aa).

Belongs to the universal ribosomal protein uS17 family. Part of the 30S ribosomal subunit.

In terms of biological role, one of the primary rRNA binding proteins, it binds specifically to the 5'-end of 16S ribosomal RNA. This chain is Small ribosomal subunit protein uS17, found in Desulforudis audaxviator (strain MP104C).